The following is a 552-amino-acid chain: Glutamyl-tRNA reductase 1, chloroplastic (552 aa).

Residues 150–153, Ser-210, 215–217, and Gln-221 each bind substrate; these read TCNR and EGQ. Catalysis depends on Cys-151, which acts as the Nucleophile. Residue 292–297 coordinates NADP(+); sequence GAGKMG.

It belongs to the glutamyl-tRNA reductase family. As to expression, primarily in cotyledons and hypocotyls of greening cucumber seedlings.

Its subcellular location is the plastid. It localises to the chloroplast. It carries out the reaction (S)-4-amino-5-oxopentanoate + tRNA(Glu) + NADP(+) = L-glutamyl-tRNA(Glu) + NADPH + H(+). Its pathway is porphyrin-containing compound metabolism; protoporphyrin-IX biosynthesis; 5-aminolevulinate from L-glutamyl-tRNA(Glu): step 1/2. In terms of biological role, catalyzes the NADPH-dependent reduction of glutamyl-tRNA(Glu) to glutamate 1-semialdehyde (GSA). In Cucumis sativus (Cucumber), this protein is Glutamyl-tRNA reductase 1, chloroplastic (HEMA1).